Here is a 138-residue protein sequence, read N- to C-terminus: Transcription antitermination protein NusB (138 aa).

This sequence belongs to the NusB family.

In terms of biological role, involved in transcription antitermination. Required for transcription of ribosomal RNA (rRNA) genes. Binds specifically to the boxA antiterminator sequence of the ribosomal RNA (rrn) operons. This chain is Transcription antitermination protein NusB, found in Yersinia enterocolitica serotype O:8 / biotype 1B (strain NCTC 13174 / 8081).